The chain runs to 387 residues: Anhydro-N-acetylmuramic acid kinase (387 aa).

17–24 (GTSMDGVD) lines the ATP pocket.

This sequence belongs to the anhydro-N-acetylmuramic acid kinase family.

It carries out the reaction 1,6-anhydro-N-acetyl-beta-muramate + ATP + H2O = N-acetyl-D-muramate 6-phosphate + ADP + H(+). The protein operates within amino-sugar metabolism; 1,6-anhydro-N-acetylmuramate degradation. It functions in the pathway cell wall biogenesis; peptidoglycan recycling. Functionally, catalyzes the specific phosphorylation of 1,6-anhydro-N-acetylmuramic acid (anhMurNAc) with the simultaneous cleavage of the 1,6-anhydro ring, generating MurNAc-6-P. Is required for the utilization of anhMurNAc either imported from the medium or derived from its own cell wall murein, and thus plays a role in cell wall recycling. The polypeptide is Anhydro-N-acetylmuramic acid kinase (Burkholderia pseudomallei (strain 1710b)).